A 1290-amino-acid polypeptide reads, in one-letter code: Vacuolating cytotoxin autotransporter (1290 aa).

The first 33 residues, 1 to 33, serve as a signal peptide directing secretion; it reads MEIQQTHRKINRPLVSLALVGALVSITPQQSHA. Positions 326-374 are disordered; it reads PPEGGYKDKPKDKPSNTTQNNANNNQQNSAQNNSNTQVINPPNSAQKTE. Basic and acidic residues predominate over residues 330-339; it reads GYKDKPKDKP. The span at 340–362 shows a compositional bias: low complexity; that stretch reads SNTTQNNANNNQQNSAQNNSNTQ. Over residues 363–374 the composition is skewed to polar residues; that stretch reads VINPPNSAQKTE. The region spanning 1018–1290 is the Autotransporter domain; that stretch reads KYEKPTNVWA…ASNLGMRYSF (273 aa).

It is found in the periplasm. The protein resides in the secreted. Its subcellular location is the cell surface. The protein localises to the cell outer membrane. Functionally, induces vacuolation of eukaryotic cells. Causes ulceration and gastric lesions. This Helicobacter pylori (strain ATCC 700392 / 26695) (Campylobacter pylori) protein is Vacuolating cytotoxin autotransporter (vacA).